The sequence spans 343 residues: SET and MYND domain-containing protein DDB_G0292454 (343 aa).

The 231-residue stretch at glutamate 77 to threonine 307 folds into the SET domain. Zn(2+) is bound by residues cysteine 93, cysteine 96, cysteine 111, cysteine 114, cysteine 120, cysteine 124, histidine 133, and cysteine 137. The segment at cysteine 93 to cysteine 137 adopts an MYND-type zinc-finger fold.

It belongs to the class V-like SAM-binding methyltransferase superfamily.

Probable methyltransferase. This Dictyostelium discoideum (Social amoeba) protein is SET and MYND domain-containing protein DDB_G0292454.